A 514-amino-acid polypeptide reads, in one-letter code: MNEEQRKASSVDVLAERDKKAEKDYSKYFEHVYQPPNLKEAKKRGKQEVRYNRDFQIDEKYRGMGNERTFLIKTYGCQMNAHDTEVIAGILEALGYQATTDINTADVILINTCAIRENAENKVFSEIGNLKHLKKERPDILIGVCGCMSQEESVVNKILKSYQNVDMIFGTHNIHHLPEILEEAYLSKAMVVEVWSKEGDVIENLPKVREGNIKAWVNIMYGCDKFCTYCIVPFTRGKERSRRPEDIIDEVRELAREGYKEITLLGQNVNSYGKDLQDIEYDLGDLLQAISKIAIPRVRFTTSHPWDFTDHMIDVISEGGNIVPHIHLPVQSGNNAVLKIMGRKYTRESYLDLVKRIKDRIPNVALTTDIIVGYPNESEEQFEETLTLYDEVGFEHAYTYLYSQRDGTPAAKMKDNVPLNVKKERLQRLNKKVGHYSQIAMSKYEGQTVTVLCEGSSKKDDQVLAGYTDKNKLVNFKAPKEMIGKLVEVRIDEAKQYSLNGSFIKEVEPEMVIQ.

Residues Met1–Ala21 are disordered. The MTTase N-terminal domain occupies Arg68–Leu186. [4Fe-4S] cluster-binding residues include Cys77, Cys113, Cys147, Cys223, Cys227, and Cys230. Residues Arg209–Ala440 form the Radical SAM core domain. The region spanning Ser442–Lys505 is the TRAM domain.

It belongs to the methylthiotransferase family. MiaB subfamily. As to quaternary structure, monomer. The cofactor is [4Fe-4S] cluster.

Its subcellular location is the cytoplasm. The enzyme catalyses N(6)-dimethylallyladenosine(37) in tRNA + (sulfur carrier)-SH + AH2 + 2 S-adenosyl-L-methionine = 2-methylsulfanyl-N(6)-dimethylallyladenosine(37) in tRNA + (sulfur carrier)-H + 5'-deoxyadenosine + L-methionine + A + S-adenosyl-L-homocysteine + 2 H(+). Its function is as follows. Catalyzes the methylthiolation of N6-(dimethylallyl)adenosine (i(6)A), leading to the formation of 2-methylthio-N6-(dimethylallyl)adenosine (ms(2)i(6)A) at position 37 in tRNAs that read codons beginning with uridine. The chain is tRNA-2-methylthio-N(6)-dimethylallyladenosine synthase from Staphylococcus aureus (strain USA300 / TCH1516).